The sequence spans 748 residues: Structure-specific endonuclease subunit SLX4 (748 aa).

Positions 50-102 are disordered; sequence LSSDDDSISTQVKSVTAQKSPITQETTKNDTERNKDVDKSCNPVSTSQPDLGE. Residues 57-75 are compositionally biased toward polar residues; that stretch reads ISTQVKSVTAQKSPITQET. Phosphothreonine; by ATR and ATM is present on T72. Residues 76–88 are compositionally biased toward basic and acidic residues; it reads TKNDTERNKDVDK. T113 carries the post-translational modification Phosphothreonine; by ATR and ATM. Disordered regions lie at residues 215–236 and 277–303; these read IKTQ…KGEK and EKSS…PPEL. The span at 222–236 shows a compositional bias: basic and acidic residues; sequence NSDKPPRARNNKGEK. Low complexity predominate over residues 277 to 291; sequence EKSSSSLDNQESSQQ. Phosphoserine; by ATR and ATM is present on S289. Position 319 is a phosphothreonine; by ATR and ATM (T319). Phosphoserine; by ATR and ATM occurs at positions 329 and 355.

Belongs to the SLX4 family. Forms a heterodimer with SLX1. Interacts with RAD1; catalytic subunit of the RAD1-RAD10 endonuclease. Interacts with RTT107. In terms of processing, phosphorylated by ATR (MEC1) and ATM (TEL1) upon DNA damage. This appears to be required for the function with the RAD1-RAD10 endonuclease.

The protein resides in the nucleus. The protein localises to the cytoplasm. Regulatory subunit that interacts with and increases the activity of different structure-specific endonucleases. Has several distinct roles in protecting genome stability by resolving diverse forms of deleterious DNA structures. Component of the SLX1-SLX4 structure-specific endonuclease that resolves DNA secondary structures generated during DNA repair and recombination. Has endonuclease activity towards branched DNA substrates, introducing single-strand cuts in duplex DNA close to junctions with ss-DNA. Has a preference for simple Y, 5'-flap and replication fork-like structures. It cleaves the strand bearing the 5'-non-homologous arm at the branch site junction and generates ligatable, nicked products from the 5'-flap or replication fork substrates. Plays a critical role in maintaining the integrity of the ribosomal DNA (rDNA) loci, where it has a role in re-starting stalled replication forks. Has Holliday junction resolvase activity in vitro. Interacts with the structure-specific RAD1-RAD10 endonuclease and promotes RAD1-RAD10-dependent 3'-non-homologous tail removal (NHTR) during repair of double-strand breaks by single-strand annealing. SLX4 also promotes recovery from DNA-alkylation-induced replisome stalling during DNA replication by facilitating the error-free mode of lesion bypass. This does not require SLX1 or RAD1-RAD10, but probably RTT107. This chain is Structure-specific endonuclease subunit SLX4, found in Saccharomyces cerevisiae (strain YJM789) (Baker's yeast).